We begin with the raw amino-acid sequence, 355 residues long: Heat-inducible transcription repressor HrcA (355 aa).

It belongs to the HrcA family.

Functionally, negative regulator of class I heat shock genes (grpE-dnaK-dnaJ and groELS operons). Prevents heat-shock induction of these operons. The polypeptide is Heat-inducible transcription repressor HrcA (Nitratidesulfovibrio vulgaris (strain DSM 19637 / Miyazaki F) (Desulfovibrio vulgaris)).